The sequence spans 174 residues: Glutaredoxin-C5, chloroplastic (174 aa).

A chloroplast-targeting transit peptide spans 1-51 (MAVTAFNTLKLVSSSLDPIPSVSCSSYSFSLIYVGSPYKRCLKQSCSVRAM). An N-acetylthreonine modification is found at T52. C90 is modified (S-glutathionyl cysteine; partial). Cysteines 90 and 93 form a disulfide. A Glutaredoxin domain is found at 93–171 (CTEVKTLFKR…LMLAEANGKN (79 aa)). 3 residues coordinate glutathione: V135, C148, and T149. C148 carries the S-glutathionyl cysteine; partial modification.

Belongs to the glutaredoxin family. CPYC subfamily. As to quaternary structure, monomeric apoprotein and homodimeric holoprotein containing a [2Fe-2S] cluster. No in vitro interactions with SUFE1, BOLA1, BOLA2 or BOLA4. Glutathionylated.

The protein resides in the plastid. Its subcellular location is the chloroplast. Its function is as follows. Has a glutathione-disulfide oxidoreductase activity in the presence of NADPH and glutathione reductase. Reduces low molecular weight disulfides and proteins. Can assemble a [2Fe-2S] cluster, but cannot transfer it to an apoferredoxin. This Arabidopsis thaliana (Mouse-ear cress) protein is Glutaredoxin-C5, chloroplastic.